Consider the following 165-residue polypeptide: Cyclic pyranopterin monophosphate synthase (165 aa).

Substrate contacts are provided by residues 78–80 and 116–117; these read LCH and ME. D131 is an active-site residue.

The protein belongs to the MoaC family. As to quaternary structure, homohexamer; trimer of dimers.

The enzyme catalyses (8S)-3',8-cyclo-7,8-dihydroguanosine 5'-triphosphate = cyclic pyranopterin phosphate + diphosphate. It functions in the pathway cofactor biosynthesis; molybdopterin biosynthesis. Its function is as follows. Catalyzes the conversion of (8S)-3',8-cyclo-7,8-dihydroguanosine 5'-triphosphate to cyclic pyranopterin monophosphate (cPMP). This chain is Cyclic pyranopterin monophosphate synthase, found in Sinorhizobium fredii (strain NBRC 101917 / NGR234).